Here is a 258-residue protein sequence, read N- to C-terminus: MSTLLSKTRRLNKILQKSGTEAIAFGDICQLLSDVMSCNVYLVGRKGRILGYSFSEKFECDIMKEKVVVDRKFPEDYNNKLINIQDTIANIPNKGICVFEGVGECLISKKISTIVPIVGNGDRLGTLLLARFGEEFNDDDLVLAEYSATIVGMELLRARQGEIEEEARKKAVVQLAIGTLSYSELEAVEHIFSELNGDEGLLVASKIADKVGITRSVIVNALRKFESAGVIESRSLGMKGTHIKILNEKLMDELKKIK.

The segment at 1-156 (MSTLLSKTRR…SATIVGMELL (156 aa)) is GAF domain. The segment at residues 204–223 (ASKIADKVGITRSVIVNALR) is a DNA-binding region (H-T-H motif).

This sequence belongs to the CodY family.

It localises to the cytoplasm. Its function is as follows. DNA-binding global transcriptional regulator which is involved in the adaptive response to starvation and acts by directly or indirectly controlling the expression of numerous genes in response to nutrient availability. During rapid exponential growth, CodY is highly active and represses genes whose products allow adaptation to nutrient depletion. The sequence is that of Global transcriptional regulator CodY from Clostridium perfringens (strain SM101 / Type A).